A 314-amino-acid polypeptide reads, in one-letter code: Bifunctional pinoresinol-lariciresinol reductase (314 aa).

Residues 10 to 16 (GGTGYIG), Arg-35, and Lys-44 each bind NADP(+). Lys-138 (proton acceptor) is an active-site residue. Residue Arg-142 participates in NADP(+) binding. Substrate is bound at residue His-270.

This sequence belongs to the NmrA-type oxidoreductase family. Isoflavone reductase subfamily. Dimer.

It carries out the reaction (+)-lariciresinol + NADP(+) = (+)-pinoresinol + NADPH + H(+). The enzyme catalyses (+)-secoisolariciresinol + NADP(+) = (-)-lariciresinol + NADPH + H(+). In terms of biological role, reductase involved in the lignan justicidin B biosynthesis. Catalyzes the enantioselective conversion of (+)-pinoresinol into (+)-lariciresinol and of (-)-lariciresinol into (+)-secoisolariciresinol. Low activity with the other enantiomers. Abstracts the 4R-hydride from the NADPH cofactor during catalysis. The sequence is that of Bifunctional pinoresinol-lariciresinol reductase (PLR_Lp1) from Linum perenne (Perennial flax).